The chain runs to 338 residues: Envelope glycoprotein K (338 aa).

The signal sequence occupies residues 1–30; that stretch reads MLAVRSLQHLTTVIFITAYGLVLAWYIVFG. Topologically, residues 31 to 121 are extracellular; the sequence is ASPLHRCIYA…VNCLEALWDT (91 aa). The involved in fusion stretch occupies residues 31 to 121; it reads ASPLHRCIYA…VNCLEALWDT (91 aa). Asparagine 48 and asparagine 58 each carry an N-linked (GlcNAc...) asparagine; by host glycan. Residues 122–140 form a helical membrane-spanning segment; sequence QMRLVVVGWFLYLAFVALH. The Cytoplasmic portion of the chain corresponds to 141–212; it reads QRRCMFGVVS…DPVTFLYHRP (72 aa). A helical transmembrane segment spans residues 213–233; sequence AIGVIVGCELLLRFVALGLIV. Over 234–243 the chain is Extracellular; that stretch reads GTALISRGAC. The helical transmembrane segment at 244–264 threads the bilayer; it reads AITHPLFLTITTWCFVSIIAL. Residues 265–301 lie on the Cytoplasmic side of the membrane; that stretch reads TELYFILRRGSAPKNAEPAAPRGRSKGWSGVCGRCCS. An interaction with UL20 region spans residues 265–301; sequence TELYFILRRGSAPKNAEPAAPRGRSKGWSGVCGRCCS. The chain crosses the membrane as a helical span at residues 302–322; the sequence is IILSGIAVRLCYIAVVAGVVL. The Extracellular portion of the chain corresponds to 323-338; sequence VALRYEQEIQRRLFDL.

It belongs to the alphaherpesvirinae glycoprotein K family. In terms of assembly, interacts (via UL20 interaction region) with protein UL20 (via N-terminus); this interaction probably plays a role in the coordinate transport of protein UL20 and gK to the trans-Golgi network (TGN), and is required for the cell surface expression of gK. Post-translationally, N-glycosylated.

It is found in the host cell membrane. It localises to the host endosome membrane. The protein localises to the host Golgi apparatus membrane. Glycoprotein that probably modulates membrane fusion events during secondary envelopment of cytoplasmic capsids that bud into specific trans-Golgi network (TGN)-derived membranes. Also plays a role, together with gB, in virus-induced cell-to-cell fusion (syncytia formation). Seems to block fusion of virions with infected-cell membranes. This chain is Envelope glycoprotein K (gK), found in Human herpesvirus 2 (strain HG52) (HHV-2).